We begin with the raw amino-acid sequence, 168 residues long: N-alpha-acetyltransferase 50 (168 aa).

An N-acetyltransferase domain is found at 5 to 154 (IELGDVTPHN…DAHVLQKSLR (150 aa)). Residue tyrosine 30 coordinates substrate. Residue tyrosine 72 is part of the active site. Methionine 74 lines the substrate pocket. 76–89 (LGCLAPYRRLGIGT) contributes to the acetyl-CoA binding site. Residue histidine 111 is part of the active site. 116-125 (NESAIDFYQK) is a CoA binding site. The tract at residues 137 to 140 (YYKR) is substrate.

Belongs to the acetyltransferase family. GNAT subfamily. Interacts with naa35.

It localises to the cytoplasm. It is found in the nucleus. It catalyses the reaction N-terminal L-methionyl-L-alanyl-[protein] + acetyl-CoA = N-terminal N(alpha)-acetyl-L-methionyl-L-alanyl-[protein] + CoA + H(+). The catalysed reaction is N-terminal L-methionyl-L-seryl-[protein] + acetyl-CoA = N-terminal N(alpha)-acetyl-L-methionyl-L-seryl-[protein] + CoA + H(+). The enzyme catalyses N-terminal L-methionyl-L-valyl-[protein] + acetyl-CoA = N-terminal N(alpha)-acetyl-L-methionyl-L-valyl-[protein] + CoA + H(+). It carries out the reaction N-terminal L-methionyl-L-threonyl-[protein] + acetyl-CoA = N-terminal N(alpha)-acetyl-L-methionyl-L-threonyl-[protein] + CoA + H(+). It catalyses the reaction N-terminal L-methionyl-L-lysyl-[protein] + acetyl-CoA = N-terminal N(alpha)-acetyl-L-methionyl-L-lysyl-[protein] + CoA + H(+). The catalysed reaction is N-terminal L-methionyl-L-leucyl-[protein] + acetyl-CoA = N-terminal N(alpha)-acetyl-L-methionyl-L-leucyl-[protein] + CoA + H(+). The enzyme catalyses N-terminal L-methionyl-L-phenylalanyl-[protein] + acetyl-CoA = N-terminal N(alpha)-acetyl-L-methionyl-L-phenylalanyl-[protein] + CoA + H(+). It carries out the reaction N-terminal L-methionyl-L-tyrosyl-[protein] + acetyl-CoA = N-terminal N(alpha)-acetyl-L-methionyl-L-tyrosyl-[protein] + CoA + H(+). In terms of biological role, N-alpha-acetyltransferase that acetylates the N-terminus of proteins that retain their initiating methionine. Has a broad substrate specificity: able to acetylate the initiator methionine of most peptides, except for those with a proline in second position. Also displays N-epsilon-acetyltransferase activity by mediating acetylation of the side chain of specific lysines on proteins. The relevance of N-epsilon-acetyltransferase activity is however unclear. Required for sister chromatid cohesion during mitosis by promoting binding of CDCA5/sororin to cohesin. Essential in embryonic cell proliferation and survival. This is N-alpha-acetyltransferase 50 (naa50) from Danio rerio (Zebrafish).